A 262-amino-acid polypeptide reads, in one-letter code: NAD-dependent glucose-6-phosphate dehydrogenase (262 aa).

Positions 90, 115, 152, and 156 each coordinate NAD(+). Residue Tyr152 is the Proton acceptor of the active site.

Belongs to the NAD(P)-dependent epimerase/dehydratase family. As to quaternary structure, homodimer.

It catalyses the reaction D-glucose 6-phosphate + NAD(+) = 6-phospho-D-glucono-1,5-lactone + NADH + H(+). It participates in carbohydrate degradation; pentose phosphate pathway. Functionally, catalyzes the NAD-dependent oxidation of glucose 6-phosphate to 6-phosphogluconolactone. The chain is NAD-dependent glucose-6-phosphate dehydrogenase from Haloferax volcanii (strain ATCC 29605 / DSM 3757 / JCM 8879 / NBRC 14742 / NCIMB 2012 / VKM B-1768 / DS2) (Halobacterium volcanii).